Reading from the N-terminus, the 342-residue chain is Galactose mutarotase (342 aa).

Ser14 is modified (phosphoserine). Beta-D-galactose is bound by residues 81–82 (NR) and His107. Ser124 carries the post-translational modification Phosphoserine. His176 functions as the Proton donor in the catalytic mechanism. Residues 176–178 (HSY), Asp243, Gln279, and Glu307 each bind beta-D-galactose. Residue Glu307 is the Proton acceptor of the active site.

This sequence belongs to the aldose epimerase family. In terms of assembly, monomer.

It is found in the cytoplasm. It catalyses the reaction alpha-D-galactose = beta-D-galactose. The catalysed reaction is alpha-D-glucose = beta-D-glucose. Its pathway is carbohydrate metabolism; hexose metabolism. It participates in carbohydrate metabolism; galactose metabolism. Mutarotase that catalyzes the interconversion of beta-D-galactose and alpha-D-galactose during galactose metabolism. Beta-D-galactose is metabolized in the liver into glucose 1-phosphate, the primary metabolic fuel, by the action of four enzymes that constitute the Leloir pathway: GALM, GALK1 (galactokinase), GALT (galactose-1-phosphate uridylyltransferase) and GALE (UDP-galactose-4'-epimerase). Involved in the maintenance of the equilibrium between the beta- and alpha-anomers of galactose, therefore ensuring a sufficient supply of the alpha-anomer for GALK1. Also active on D-glucose although shows a preference for galactose over glucose. The sequence is that of Galactose mutarotase (Galm) from Rattus norvegicus (Rat).